A 285-amino-acid polypeptide reads, in one-letter code: 4-diphosphocytidyl-2-C-methyl-D-erythritol kinase (285 aa).

Lys-9 is an active-site residue. Residue 89-99 (PLGAGLGGGSS) participates in ATP binding. The active site involves Asp-131.

The protein belongs to the GHMP kinase family. IspE subfamily.

It carries out the reaction 4-CDP-2-C-methyl-D-erythritol + ATP = 4-CDP-2-C-methyl-D-erythritol 2-phosphate + ADP + H(+). The protein operates within isoprenoid biosynthesis; isopentenyl diphosphate biosynthesis via DXP pathway; isopentenyl diphosphate from 1-deoxy-D-xylulose 5-phosphate: step 3/6. Catalyzes the phosphorylation of the position 2 hydroxy group of 4-diphosphocytidyl-2C-methyl-D-erythritol. This chain is 4-diphosphocytidyl-2-C-methyl-D-erythritol kinase, found in Thermodesulfovibrio yellowstonii (strain ATCC 51303 / DSM 11347 / YP87).